The chain runs to 97 residues: Essential MCU regulator, mitochondrial (97 aa).

The transit peptide at 1–37 (MAARMGVLSVAGFRAAARAGGLLARPKQSTAVVPCRT) directs the protein to the mitochondrion. Topologically, residues 38–55 (VIASSAGAILPKPEKVSF) are mitochondrial matrix. The helical transmembrane segment at 56-75 (GLLRVFTVVIPFLYIGTLIS) threads the bilayer. Over 76 to 97 (KNFAAVLEEHDIFVPEDDDDDD) the chain is Mitochondrial intermembrane.

It belongs to the SMDT1/EMRE family. As to quaternary structure, component of the uniplex complex.

It localises to the mitochondrion inner membrane. Essential regulatory subunit of the mitochondrial calcium uniporter complex (uniplex), a complex that mediates calcium uptake into mitochondria. Required to bridge the calcium-sensing proteins micu1 with the calcium-conducting subunit mcu. Acts by mediating activation of mcu and retention of micu1 to the mcu pore, in order to ensure tight regulation of the uniplex complex and appropriate responses to intracellular calcium signaling. This is Essential MCU regulator, mitochondrial from Xenopus laevis (African clawed frog).